A 251-amino-acid polypeptide reads, in one-letter code: MSVSPVSIVSTPVAVSASPAGAPDQPVQPVTVRWRGREAYEASFDAMRAFTDTRTADTGDEIWVVEHPPVYTLGQAGDPAHLLVADSGVPLVKVDRGGQITYHGPGQIVVYLLLDLRRRKLMVRTLVTKIEEAVIETLAAYNLASVRKAGAPGIYVASGVHEGAKIAALGLKIRNGCSYHGLSLNVKMDLRPFLAINPCGYAGLETVDMASLEVAADWNDVAHTLVGRLIANLDGASAAADKPHALEQSND.

Residues 56-241 enclose the BPL/LPL catalytic domain; sequence ADTGDEIWVV…NLDGASAAAD (186 aa). Substrate-binding positions include 96–103, 168–170, and 181–183; these read RGGQITYH, ALG, and GLS. Cysteine 199 acts as the Acyl-thioester intermediate in catalysis.

Belongs to the LipB family.

The protein resides in the cytoplasm. The catalysed reaction is octanoyl-[ACP] + L-lysyl-[protein] = N(6)-octanoyl-L-lysyl-[protein] + holo-[ACP] + H(+). Its pathway is protein modification; protein lipoylation via endogenous pathway; protein N(6)-(lipoyl)lysine from octanoyl-[acyl-carrier-protein]: step 1/2. Functionally, catalyzes the transfer of endogenously produced octanoic acid from octanoyl-acyl-carrier-protein onto the lipoyl domains of lipoate-dependent enzymes. Lipoyl-ACP can also act as a substrate although octanoyl-ACP is likely to be the physiological substrate. In Burkholderia cenocepacia (strain HI2424), this protein is Octanoyltransferase.